A 395-amino-acid chain; its full sequence is Cytochrome b561 and DOMON domain-containing protein At5g47530 (395 aa).

The signal sequence occupies residues 1–24; sequence MAISSNLLLCLSLFIFIITKSALA. The DOMON domain occupies 47-162; the sequence is LDSFLHYTYD…GIINTVWQDG (116 aa). The region spanning 176-371 is the Cytochrome b561 domain; it reads GNNVRSVSTL…LEGFTWYVVI (196 aa). Transmembrane regions (helical) follow at residues 210–230 and 242–262; these read IHGI…AIIA and AWFY…VAGW. Heme b-binding residues include histidine 211, histidine 247, and histidine 280. Residues 282–302 form a helical membrane-spanning segment; sequence AVGIALFCLATIQVFAMFLRP. Histidine 316 serves as a coordination point for heme b. Transmembrane regions (helical) follow at residues 318 to 338 and 351 to 371; these read TVGY…LDIL and IIVV…YVVI.

The cofactor is heme b.

The protein resides in the membrane. May act as a catecholamine-responsive trans-membrane electron transporter. The protein is Cytochrome b561 and DOMON domain-containing protein At5g47530 of Arabidopsis thaliana (Mouse-ear cress).